The primary structure comprises 211 residues: Large ribosomal subunit protein uL4 (211 aa).

The tract at residues Arg44–Arg94 is disordered.

It belongs to the universal ribosomal protein uL4 family. In terms of assembly, part of the 50S ribosomal subunit.

In terms of biological role, one of the primary rRNA binding proteins, this protein initially binds near the 5'-end of the 23S rRNA. It is important during the early stages of 50S assembly. It makes multiple contacts with different domains of the 23S rRNA in the assembled 50S subunit and ribosome. Forms part of the polypeptide exit tunnel. In Leptospira borgpetersenii serovar Hardjo-bovis (strain JB197), this protein is Large ribosomal subunit protein uL4.